The chain runs to 226 residues: Pyridoxal 5'-phosphate synthase subunit Pdx2 (226 aa).

G52 to S54 is a binding site for L-glutamine. Residue C87 is the Nucleophile of the active site. L-glutamine contacts are provided by residues R124 and I156–R157. Residues H199 and E201 each act as charge relay system in the active site.

The protein belongs to the glutaminase PdxT/SNO family. As to quaternary structure, in the presence of PdxS, forms a dodecamer of heterodimers. Only shows activity in the heterodimer.

It catalyses the reaction aldehydo-D-ribose 5-phosphate + D-glyceraldehyde 3-phosphate + L-glutamine = pyridoxal 5'-phosphate + L-glutamate + phosphate + 3 H2O + H(+). The catalysed reaction is L-glutamine + H2O = L-glutamate + NH4(+). It participates in cofactor biosynthesis; pyridoxal 5'-phosphate biosynthesis. In terms of biological role, catalyzes the hydrolysis of glutamine to glutamate and ammonia as part of the biosynthesis of pyridoxal 5'-phosphate. The resulting ammonia molecule is channeled to the active site of PdxS. This Plasmodium berghei protein is Pyridoxal 5'-phosphate synthase subunit Pdx2.